Reading from the N-terminus, the 428-residue chain is L-fucose-proton symporter (428 aa).

12 helical membrane passes run 10-30, 51-71, 78-98, 100-120, 147-167, 204-224, 250-270, 288-308, 311-331, 339-359, 371-391, and 401-421; these read FIVPFVLITSLFALWGFANDI, LVQLAFYGGYGTMAIPAALFA, AGILLGLALYAIGAFLFWPAA, YEIFNFFLVSLYILTFGLAFL, FNPLGSITGMFVASQLVLTNL, IALGFVVVAVFIIIGLKKMPA, EGVIAQAFYVGVQIMCWTFIV, IIAMAIFISSRFISTALMKYL, EFMLMLFAIGGFLSILGVIFI, CLILTSGFMPLMFPTIYGIAL, AGLVMAIVGGALMPPLQGMII, and AVNFSFILPLICFVVIAIYGF.

It belongs to the major facilitator superfamily. FHS transporter (TC 2.A.1.7) family.

Its subcellular location is the cell inner membrane. It carries out the reaction L-fucose(in) + H(+)(in) = L-fucose(out) + H(+)(out). Mediates the uptake of L-fucose across the boundary membrane with the concomitant transport of protons into the cell (symport system). The sequence is that of L-fucose-proton symporter (fucP) from Haemophilus influenzae (strain ATCC 51907 / DSM 11121 / KW20 / Rd).